A 124-amino-acid chain; its full sequence is Ribonuclease pancreatic (124 aa).

Basic and acidic residues predominate over residues Lys-1–Met-13. The disordered stretch occupies residues Lys-1–Asn-24. 2 residues coordinate substrate: Lys-7 and Arg-10. The active-site Proton acceptor is the His-12. 4 cysteine pairs are disulfide-bonded: Cys-26-Cys-84, Cys-40-Cys-95, Cys-58-Cys-110, and Cys-65-Cys-72. A glycan (N-linked (GlcNAc...) asparagine; partial) is linked at Asn-34. Substrate-binding positions include Lys-41 to Thr-45, Lys-66, and Arg-85. The active-site Proton donor is His-119.

This sequence belongs to the pancreatic ribonuclease family. As to quaternary structure, monomer. Interacts with and forms tight 1:1 complexes with RNH1. Dimerization of two such complexes may occur. Interaction with RNH1 inhibits this protein. As to expression, pancreas.

Its subcellular location is the secreted. It carries out the reaction an [RNA] containing cytidine + H2O = an [RNA]-3'-cytidine-3'-phosphate + a 5'-hydroxy-ribonucleotide-3'-[RNA].. The catalysed reaction is an [RNA] containing uridine + H2O = an [RNA]-3'-uridine-3'-phosphate + a 5'-hydroxy-ribonucleotide-3'-[RNA].. Endonuclease that catalyzes the cleavage of RNA on the 3' side of pyrimidine nucleotides. Acts on single-stranded and double-stranded RNA. The protein is Ribonuclease pancreatic (RNASE1) of Ovis aries (Sheep).